We begin with the raw amino-acid sequence, 393 residues long: Probable N-acetyl-LL-diaminopimelate aminotransferase (393 aa).

K231 carries the N6-(pyridoxal phosphate)lysine modification.

Belongs to the class-I pyridoxal-phosphate-dependent aminotransferase family. In terms of assembly, homodimer. Pyridoxal 5'-phosphate serves as cofactor.

The protein resides in the cytoplasm. The enzyme catalyses N-acetyl-(2S,6S)-2,6-diaminopimelate + 2-oxoglutarate = L-2-acetamido-6-oxoheptanedioate + L-glutamate. Its pathway is amino-acid biosynthesis; L-lysine biosynthesis via DAP pathway; LL-2,6-diaminopimelate from (S)-tetrahydrodipicolinate (acetylase route): step 2/3. Functionally, essential for murein biosynthesis. Probably catalyzes the conversion of L-2-acetamido-6-oxopimelate to N-acetyl-LL-2,6-diaminopimelate. This is Probable N-acetyl-LL-diaminopimelate aminotransferase from Bacillus subtilis (strain 168).